Consider the following 513-residue polypeptide: RNA-binding protein FUS (513 aa).

Polar residues predominate over residues 1-14 (MASNDYTQQATQSY). Positions 1–273 (MASNDYTQQA…SEQDNSDNNT (273 aa)) are disordered. Composition is skewed to low complexity over residues 20-36 (QPGQGYSQQSNQPYGQQ), 43-63 (QSTDTSGYGQSSYSGSYGQTQ), and 84-124 (SSQS…SGYG). The segment covering 125 to 139 (QPQGGGYGQQSGYGG) has biased composition (gly residues). Over residues 140–164 (QQQSYGQQQSYNPPQGYGQQSQYNS) the composition is skewed to low complexity. Gly residues-rich tracts occupy residues 165 to 176 (SGGGGGGGGGSY) and 185 to 219 (SGGGGGGYGNQDQSGGYGGGQQDRGGRGRGGGGGY). Asymmetric dimethylarginine; alternate occurs at positions 211 and 213. Omega-N-methylarginine; alternate occurs at positions 211 and 213. Asymmetric dimethylarginine is present on residues R229, R231, R235, R238, and R246. The span at 231 to 246 (RGGGRGGRGGMGGSDR) shows a compositional bias: gly residues. Phosphoserine is present on S264. Residues 272 to 358 (NTIFVQGLGE…NPIKVSFATR (87 aa)) enclose the RRM domain. Phosphothreonine is present on T273. K321 participates in a covalent cross-link: Glycyl lysine isopeptide (Lys-Gly) (interchain with G-Cter in SUMO2). At S327 the chain carries Phosphoserine. Disordered stretches follow at residues 362–411 (FNRG…QRAG) and 431–513 (CNQC…ERPY). Asymmetric dimethylarginine occurs at positions 364, 370, 373, 375, and 381. Residues 364-408 (RGGGNGRGGRGRGGPMGRGGYGGGGSGGGGRGGFPSGGGGGGGQQ) are compositionally biased toward gly residues. R394 carries the asymmetric dimethylarginine; alternate modification. The residue at position 394 (R394) is an Omega-N-methylarginine; alternate. A RanBP2-type zinc finger spans residues 409–440 (RAGDWKCPNPTCENMNFSWRNECNQCKAPKPD). Residues 441–455 (GPGGGPGGSHMGGNY) are compositionally biased toward gly residues. Over residues 456-480 (GDDRRGGRGGYDRGGYRGRGGDRGG) the composition is skewed to basic and acidic residues. R460, R463, R468, R472, R474, R478, R482, and R485 each carry asymmetric dimethylarginine. A compositionally biased stretch (gly residues) spans 481–495 (FRGGRGGGDRGGFGP). R490 is subject to Asymmetric dimethylarginine; alternate. The residue at position 490 (R490) is an Omega-N-methylarginine; alternate. Basic and acidic residues predominate over residues 498 to 513 (MDSRGEHRQDRRERPY).

The protein belongs to the RRM TET family. In terms of assembly, self-oligomerizes (via N-terminal region). Oligomerization is essential for chromatin binding. Component of nuclear riboprotein complexes. Interacts with ILF3, TDRD3 and SF1. Interacts through its C-terminus with SFRS13A. Interacts with OTUB1 and SARNP. Interacts with LRSAM1. Interacts with SAFB1 in a DNA-dependent manner; this interaction tethers FUS to chromatin. Interacts with MATR3. Interacts with SNRNP70 and POLR2A; these interactions couple RNA transcription and splicing. Interacts (through its RNA-binding domain) with RALY (through its RNA-binding domain); both are components of the same RNPs. Phosphorylated in its N-terminal serine residues upon induced DNA damage. ATM and DNA-PK are able to phosphorylate FUS N-terminal region.

The protein resides in the nucleus. Functionally, DNA/RNA-binding protein that plays a role in various cellular processes such as transcription regulation, RNA splicing, RNA transport, DNA repair and damage response. Binds to ssRNA containing the consensus sequence 5'-AGGUAA-3'. Binds to nascent pre-mRNAs and acts as a molecular mediator between RNA polymerase II and U1 small nuclear ribonucleoprotein thereby coupling transcription and splicing. Also binds its own pre-mRNA and autoregulates its expression; this autoregulation mechanism is mediated by non-sense-mediated decay. Plays a role in DNA repair mechanisms by promoting D-loop formation and homologous recombination during DNA double-strand break repair. In neuronal cells, plays crucial roles in dendritic spine formation and stability, RNA transport, mRNA stability and synaptic homeostasis. The chain is RNA-binding protein FUS (FUS) from Bos taurus (Bovine).